A 211-amino-acid polypeptide reads, in one-letter code: Protein-L-isoaspartate O-methyltransferase (211 aa).

Residue serine 60 is part of the active site.

This sequence belongs to the methyltransferase superfamily. L-isoaspartyl/D-aspartyl protein methyltransferase family.

It is found in the cytoplasm. The enzyme catalyses [protein]-L-isoaspartate + S-adenosyl-L-methionine = [protein]-L-isoaspartate alpha-methyl ester + S-adenosyl-L-homocysteine. Catalyzes the methyl esterification of L-isoaspartyl residues in peptides and proteins that result from spontaneous decomposition of normal L-aspartyl and L-asparaginyl residues. It plays a role in the repair and/or degradation of damaged proteins. This chain is Protein-L-isoaspartate O-methyltransferase, found in Pseudomonas syringae pv. syringae (strain B728a).